Reading from the N-terminus, the 119-residue chain is Large ribosomal subunit protein bL20 (119 aa).

It belongs to the bacterial ribosomal protein bL20 family.

Its function is as follows. Binds directly to 23S ribosomal RNA and is necessary for the in vitro assembly process of the 50S ribosomal subunit. It is not involved in the protein synthesizing functions of that subunit. This is Large ribosomal subunit protein bL20 (rplT) from Geobacillus stearothermophilus (Bacillus stearothermophilus).